Consider the following 78-residue polypeptide: Probable [Fe-S]-dependent transcriptional repressor (78 aa).

Iron-sulfur cluster is bound by residues Cys-56, Cys-61, Cys-64, and Cys-70.

The protein belongs to the FeoC family.

Functionally, may function as a transcriptional regulator that controls feoABC expression. This is Probable [Fe-S]-dependent transcriptional repressor from Escherichia coli O7:K1 (strain IAI39 / ExPEC).